The chain runs to 152 residues: Transcriptional regulator MraZ (152 aa).

SpoVT-AbrB domains follow at residues 5 to 52 (ATLV…PLPE) and 81 to 124 (ASEC…DETT).

The protein belongs to the MraZ family. In terms of assembly, forms oligomers.

The protein resides in the cytoplasm. It is found in the nucleoid. In terms of biological role, negatively regulates its own expression and that of the subsequent genes in the proximal part of the division and cell wall (dcw) gene cluster. Acts by binding directly to DNA. May also regulate the expression of genes outside the dcw cluster. This is Transcriptional regulator MraZ from Escherichia fergusonii (strain ATCC 35469 / DSM 13698 / CCUG 18766 / IAM 14443 / JCM 21226 / LMG 7866 / NBRC 102419 / NCTC 12128 / CDC 0568-73).